A 170-amino-acid polypeptide reads, in one-letter code: Photosystem I assembly protein Ycf3 (170 aa).

TPR repeat units lie at residues 35–68 (AFTYYRDGMLAQSEGNYAEALQNYYEATRLEIDP), 72–105 (SYILYNIGLIHTSNGEHTKALEYYFRALERNPFL), and 120–153 (GEQAILQGDSEIAEAWFDQAAEYWKQAIALTPGN).

It belongs to the Ycf3 family.

The protein resides in the plastid. The protein localises to the chloroplast thylakoid membrane. Essential for the assembly of the photosystem I (PSI) complex. May act as a chaperone-like factor to guide the assembly of the PSI subunits. This chain is Photosystem I assembly protein Ycf3, found in Saccharum officinarum (Sugarcane).